The primary structure comprises 613 residues: Dihydroxy-acid dehydratase (613 aa).

Asp-81 contacts Mg(2+). Cys-122 contributes to the [2Fe-2S] cluster binding site. Mg(2+)-binding residues include Asp-123 and Lys-124. The residue at position 124 (Lys-124) is an N6-carboxylysine. Cys-195 is a [2Fe-2S] cluster binding site. Position 491 (Glu-491) interacts with Mg(2+). Catalysis depends on Ser-517, which acts as the Proton acceptor.

Belongs to the IlvD/Edd family. In terms of assembly, homodimer. [2Fe-2S] cluster is required as a cofactor. Mg(2+) serves as cofactor.

The catalysed reaction is (2R)-2,3-dihydroxy-3-methylbutanoate = 3-methyl-2-oxobutanoate + H2O. It catalyses the reaction (2R,3R)-2,3-dihydroxy-3-methylpentanoate = (S)-3-methyl-2-oxopentanoate + H2O. Its pathway is amino-acid biosynthesis; L-isoleucine biosynthesis; L-isoleucine from 2-oxobutanoate: step 3/4. The protein operates within amino-acid biosynthesis; L-valine biosynthesis; L-valine from pyruvate: step 3/4. Functionally, functions in the biosynthesis of branched-chain amino acids. Catalyzes the dehydration of (2R,3R)-2,3-dihydroxy-3-methylpentanoate (2,3-dihydroxy-3-methylvalerate) into 2-oxo-3-methylpentanoate (2-oxo-3-methylvalerate) and of (2R)-2,3-dihydroxy-3-methylbutanoate (2,3-dihydroxyisovalerate) into 2-oxo-3-methylbutanoate (2-oxoisovalerate), the penultimate precursor to L-isoleucine and L-valine, respectively. This is Dihydroxy-acid dehydratase from Vibrio atlanticus (strain LGP32) (Vibrio splendidus (strain Mel32)).